Here is a 238-residue protein sequence, read N- to C-terminus: UDP-2,3-diacylglucosamine hydrolase (238 aa).

Aspartate 8, histidine 10, aspartate 41, asparagine 78, and histidine 113 together coordinate Mn(2+). Position 78-79 (78-79) interacts with substrate; it reads NR. The substrate site is built by aspartate 121, serine 159, asparagine 163, lysine 166, and histidine 194. Positions 194 and 196 each coordinate Mn(2+).

This sequence belongs to the LpxH family. Mn(2+) serves as cofactor.

Its subcellular location is the cell inner membrane. The enzyme catalyses UDP-2-N,3-O-bis[(3R)-3-hydroxytetradecanoyl]-alpha-D-glucosamine + H2O = 2-N,3-O-bis[(3R)-3-hydroxytetradecanoyl]-alpha-D-glucosaminyl 1-phosphate + UMP + 2 H(+). Its pathway is glycolipid biosynthesis; lipid IV(A) biosynthesis; lipid IV(A) from (3R)-3-hydroxytetradecanoyl-[acyl-carrier-protein] and UDP-N-acetyl-alpha-D-glucosamine: step 4/6. Functionally, hydrolyzes the pyrophosphate bond of UDP-2,3-diacylglucosamine to yield 2,3-diacylglucosamine 1-phosphate (lipid X) and UMP by catalyzing the attack of water at the alpha-P atom. Involved in the biosynthesis of lipid A, a phosphorylated glycolipid that anchors the lipopolysaccharide to the outer membrane of the cell. The sequence is that of UDP-2,3-diacylglucosamine hydrolase from Shewanella pealeana (strain ATCC 700345 / ANG-SQ1).